We begin with the raw amino-acid sequence, 442 residues long: Protein translocase subunit SecY (442 aa).

10 consecutive transmembrane segments (helical) span residues 29–49, 69–89, 126–146, 153–173, 182–202, 217–237, 274–294, 320–340, 377–397, and 400–420; these read LITIGLLILVRVGIFIPVPDI, IFTGGGLSTVGIFALGILPYI, YIAFGWCIIQGLGLTVGLLRP, PLFIFQTVLAITAGSMFVMWI, IGNGASLLIFVNIVATLPQTL, ITAVVLLMLVFLVMIVGIVFV, VMPIIFASAVLILPSSLAGFA, VYTVVYSVMIFFFSYFYASLI, LTFLGAIFLSFVATLPIFVEQ, and GVTTFQGLGATSLLILVGVAI.

The protein belongs to the SecY/SEC61-alpha family. In terms of assembly, component of the Sec protein translocase complex. Heterotrimer consisting of SecY, SecE and SecG subunits. The heterotrimers can form oligomers, although 1 heterotrimer is thought to be able to translocate proteins. Interacts with the ribosome. Interacts with SecDF, and other proteins may be involved. Interacts with SecA.

The protein resides in the cell inner membrane. The protein localises to the cellular thylakoid membrane. In terms of biological role, the central subunit of the protein translocation channel SecYEG. Consists of two halves formed by TMs 1-5 and 6-10. These two domains form a lateral gate at the front which open onto the bilayer between TMs 2 and 7, and are clamped together by SecE at the back. The channel is closed by both a pore ring composed of hydrophobic SecY resides and a short helix (helix 2A) on the extracellular side of the membrane which forms a plug. The plug probably moves laterally to allow the channel to open. The ring and the pore may move independently. This Synechocystis sp. (strain ATCC 27184 / PCC 6803 / Kazusa) protein is Protein translocase subunit SecY.